We begin with the raw amino-acid sequence, 118 residues long: Appetite-regulating hormone (118 aa).

The signal sequence occupies residues 1–24 (MPSTGTICSLLLLSVLLMADLAMA). Serine 27 carries O-decanoyl serine; alternate lipidation. A lipid anchor (O-hexanoyl serine; alternate) is attached at serine 27. The O-octanoyl serine; alternate moiety is linked to residue serine 27. The tract at residues 29-50 (LSPEHQKVQQRKESKKPAAKLK) is disordered. Over residues 32–44 (EHQKVQQRKESKK) the composition is skewed to basic and acidic residues. A propeptide spans 53–76 (ALEGWLGPEDSGEVEGTEDKLEIR) (removed in mature form). At leucine 99 the chain carries Leucine amide. A propeptide spans 100–118 (GKFLQDILWEEVTEAPADK) (removed in mature form).

The protein belongs to the motilin family. Post-translationally, O-octanoylated by GOAT/MBOAT4. O-octanoylation is essential for ghrelin activity. Amidation of Leu-99 is essential for obestatin activity.

The protein resides in the secreted. Its function is as follows. Ghrelin is the ligand for growth hormone secretagogue receptor type 1 (GHSR). Induces the release of growth hormone from the pituitary. Has an appetite-stimulating effect, induces adiposity and stimulates gastric acid secretion. Involved in growth regulation. Obestatin may be the ligand for GPR39. May have an appetite-reducing effect resulting in decreased food intake. May reduce gastric emptying activity and jejunal motility. The sequence is that of Appetite-regulating hormone (GHRL) from Sus scrofa (Pig).